The sequence spans 883 residues: Glutamate receptor 2 (883 aa).

A signal peptide spans 1–21 (MQKIMHISVLLSPVLWGLIFG). Topologically, residues 22–543 (VSSNSIQIGG…GVFSFLDPLA (522 aa)) are extracellular. Cysteine 78 and cysteine 330 are oxidised to a cystine. Asparagine 256, asparagine 370, asparagine 406, and asparagine 413 each carry an N-linked (GlcNAc...) asparagine glycan. Residues proline 499, threonine 501, and arginine 506 each contribute to the L-glutamate site. A helical transmembrane segment spans residues 544–564 (YEIWMCIVFAYIGVSVVLFLV). The Cytoplasmic portion of the chain corresponds to 565 to 591 (SRFSPYEWHTEEFEDGRETQSSESTNE). The segment at residues 592 to 607 (FGIFNSLWFSLGAFMQ) is an intramembrane region (helical; Pore-forming). An intramembrane segment occupies 608–610 (QGC). Cysteine 610 carries the S-palmitoyl cysteine lipid modification. The Cytoplasmic portion of the chain corresponds to 611–616 (DISPRS). Residues 617 to 637 (LSGRIVGGVWWFFTLIIISSY) form a helical membrane-spanning segment. Residues 638–812 (TANLAAFLTV…EKTSALSLSN (175 aa)) lie on the Extracellular side of the membrane. Residues serine 675 and threonine 676 each coordinate L-glutamate. The residue at position 683 (serine 683) is a Phosphoserine; by PKC. Serine 717 carries the phosphoserine; by PKG modification. Residue glutamate 726 participates in L-glutamate binding. Cysteine 739 and cysteine 794 are oxidised to a cystine. The chain crosses the membrane as a helical span at residues 813 to 833 (VAGVFYILVGGLGLAMLVALI). Residues 834-883 (EFCYKSRAEAKRMKVAKNPQNINPSSSQNSQNFATYKEGYNVYGIESVKI) are Cytoplasmic-facing. The S-palmitoyl cysteine moiety is linked to residue cysteine 836. Phosphoserine occurs at positions 860 and 863. The segment at 867–877 (ATYKEGYNVYG) is required for interaction with IQSEC1. Tyrosine 876 carries the post-translational modification Phosphotyrosine. Serine 880 carries the post-translational modification Phosphoserine.

The protein belongs to the glutamate-gated ion channel (TC 1.A.10.1) family. GRIA2 subfamily. As to quaternary structure, homotetramer or heterotetramer of pore-forming glutamate receptor subunits. Tetramers may be formed by the dimerization of dimers. May interact with MPP4. Forms a ternary complex with GRIP1 and CSPG4. Interacts with ATAD1 in an ATP-dependent manner. ATAD1-catalyzed ATP hydrolysis disrupts binding to ATAD1 and to GRIP1 and leads to AMPAR complex disassembly. Interacts with GRIP2. Interacts with GRIP1. Interacts with NSF via its C-terminus. Interacts with CACNG2, PICK1 and GRIP2. Interacts with GRIA1 and SYNDIG1. Part of a complex containing GRIA2, NSF and NAPA and/or NAPB. Interacts with SNX27 (via PDZ domain); the interaction is required for recycling to the plasma membrane when endocytosed and prevent degradation in lysosomes. Interacts with LRFN1. Found in a complex with GRIA1, GRIA3, GRIA4, CNIH2, CNIH3, CACNG2, CACNG3, CACNG4, CACNG5, CACNG7 and CACNG8. Interacts with CACNG5. Interacts with OLFM2. Interacts with AP4B1, AP4E1 and AP4M1; probably indirect it mediates the somatodendritic localization of GRIA2 in neurons. Forms a complex with GRIP1, NSG1 and STX12; controls the intracellular fate of AMPAR and the endosomal sorting of the GRIA2 subunit toward recycling and membrane targeting. Interacts with IQSEC1; the interaction is required for ARF6 activation. Interacts (heterotetramer form) with CNIH2 and CNIH3; this interaction promotes expression at the plasma membrane and extensively modulates their gating properties by slowing deactivation and desensitization kinetics. Palmitoylated. Depalmitoylated upon L-glutamate stimulation. Cys-610 palmitoylation leads to Golgi retention and decreased cell surface expression. In contrast, Cys-836 palmitoylation does not affect cell surface expression but regulates stimulation-dependent endocytosis. Post-translationally, phosphorylation at Tyr-876 is required for interaction with IQSEC1 and ARF6 activation, which in turn triggers AMPAR internalization for persistent synaptic depression. In terms of processing, ubiquitinated by RNF167, leading to its degradation. N-glycosylated. As to expression, detected in forebrain. Detected in dendrites of neuronal cells. Expressed in the pyramidal cell layers of CA1 and CA3 and in the granule cell layer of the dentate gyrus.

The protein resides in the cell membrane. Its subcellular location is the postsynaptic cell membrane. It localises to the postsynaptic density membrane. It catalyses the reaction Ca(2+)(in) = Ca(2+)(out). The enzyme catalyses Na(+)(in) = Na(+)(out). In terms of biological role, ionotropic glutamate receptor that functions as a ligand-gated cation channel, gated by L-glutamate and glutamatergic agonists such as alpha-amino-3-hydroxy-5-methyl-4-isoxazolepropionic acid (AMPA), quisqualic acid, and kainic acid. L-glutamate acts as an excitatory neurotransmitter at many synapses in the central nervous system and plays an important role in fast excitatory synaptic transmission. Binding of the excitatory neurotransmitter L-glutamate induces a conformation change, leading to the opening of the cation channel, and thereby converts the chemical signal to an electrical impulse upon entry of monovalent and divalent cations such as sodium and calcium. The receptor then desensitizes rapidly and enters in a transient inactive state, characterized by the presence of bound agonist. In the presence of CACNG4 or CACNG7 or CACNG8, shows resensitization which is characterized by a delayed accumulation of current flux upon continued application of L-glutamate. Through complex formation with NSG1, GRIP1 and STX12 controls the intracellular fate of AMPAR and the endosomal sorting of the GRIA2 subunit toward recycling and membrane targeting. The sequence is that of Glutamate receptor 2 from Rattus norvegicus (Rat).